The chain runs to 223 residues: Riboflavin kinase (223 aa).

The tract at residues 1-89 (MHRINALKHL…KHIFCGDEDK (89 aa)) is unknown. The riboflavin kinase stretch occupies residues 90 to 223 (VELYGNVITG…IMIEDRSACE (134 aa)). 99–104 (GLGEGQ) lines the CDP pocket. Mg(2+) is bound by residues threonine 128 and asparagine 130. The FMN site is built by serine 185 and glutamate 193. Residue 198–201 (VHLR) participates in CDP binding.

It belongs to the archaeal riboflavin kinase family. Mg(2+) serves as cofactor.

It catalyses the reaction riboflavin + CTP = CDP + FMN + H(+). It functions in the pathway cofactor biosynthesis; FMN biosynthesis; FMN from riboflavin (CTP route): step 1/1. Catalyzes the CTP-dependent phosphorylation of riboflavin (vitamin B2) to form flavin mononucleotide (FMN). The polypeptide is Riboflavin kinase (ribK) (Methanococcoides burtonii (strain DSM 6242 / NBRC 107633 / OCM 468 / ACE-M)).